Consider the following 203-residue polypeptide: Small ribosomal subunit protein uS4 (203 aa).

An S4 RNA-binding domain is found at Arg93–Val156.

It belongs to the universal ribosomal protein uS4 family. In terms of assembly, part of the 30S ribosomal subunit. Contacts protein S5. The interaction surface between S4 and S5 is involved in control of translational fidelity.

Functionally, one of the primary rRNA binding proteins, it binds directly to 16S rRNA where it nucleates assembly of the body of the 30S subunit. In terms of biological role, with S5 and S12 plays an important role in translational accuracy. The chain is Small ribosomal subunit protein uS4 from Streptococcus gordonii (strain Challis / ATCC 35105 / BCRC 15272 / CH1 / DL1 / V288).